A 166-amino-acid chain; its full sequence is Ribosome maturation factor RimM (166 aa).

Residues 95–164 (EEEYYAYELV…KKIIVKEELL (70 aa)) enclose the PRC barrel domain.

Belongs to the RimM family. In terms of assembly, binds ribosomal protein uS19.

Its subcellular location is the cytoplasm. An accessory protein needed during the final step in the assembly of 30S ribosomal subunit, possibly for assembly of the head region. Essential for efficient processing of 16S rRNA. May be needed both before and after RbfA during the maturation of 16S rRNA. It has affinity for free ribosomal 30S subunits but not for 70S ribosomes. This Aquifex aeolicus (strain VF5) protein is Ribosome maturation factor RimM.